The chain runs to 103 residues: MKRVLTSVVLAPRNAAIAVIGLYRRIVSPLYGDVCRYYPSCSAYGLEAVQEHGLIRGGGLAVWRVCRCHPWAEGGIDDVPARQVQQYRRTRYGFVVAPSHGKG.

The protein belongs to the UPF0161 family.

It is found in the cell membrane. Could be involved in insertion of integral membrane proteins into the membrane. The sequence is that of Putative membrane protein insertion efficiency factor from Clavibacter sepedonicus (Clavibacter michiganensis subsp. sepedonicus).